Here is a 39-residue protein sequence, read N- to C-terminus: uncharacterized protein (39 aa).

A helical transmembrane segment spans residues 18 to 38 (AIKVIALVVLITISAVVYLSV).

It is found in the membrane. This is an uncharacterized protein from Enterobacteriaceae (Bacteriophage Mu).